A 287-amino-acid chain; its full sequence is Ribonuclease Z (287 aa).

Positions 64, 66, 68, 69, 124, 191, and 250 each coordinate Zn(2+). D68 acts as the Proton acceptor in catalysis.

The protein belongs to the RNase Z family. Homodimer. Zn(2+) is required as a cofactor.

The catalysed reaction is Endonucleolytic cleavage of RNA, removing extra 3' nucleotides from tRNA precursor, generating 3' termini of tRNAs. A 3'-hydroxy group is left at the tRNA terminus and a 5'-phosphoryl group is left at the trailer molecule.. In terms of biological role, zinc phosphodiesterase, which displays some tRNA 3'-processing endonuclease activity. Probably involved in tRNA maturation, by removing a 3'-trailer from precursor tRNA. The polypeptide is Ribonuclease Z (Pyrobaculum arsenaticum (strain DSM 13514 / JCM 11321 / PZ6)).